The primary structure comprises 322 residues: 4-hydroxythreonine-4-phosphate dehydrogenase (322 aa).

Positions 126 and 127 each coordinate substrate. His160, His205, and His260 together coordinate a divalent metal cation. The substrate site is built by Lys268, Asn277, and Arg286.

It belongs to the PdxA family. As to quaternary structure, homodimer. Requires Zn(2+) as cofactor. Mg(2+) serves as cofactor. The cofactor is Co(2+).

It localises to the cytoplasm. The enzyme catalyses 4-(phosphooxy)-L-threonine + NAD(+) = 3-amino-2-oxopropyl phosphate + CO2 + NADH. The protein operates within cofactor biosynthesis; pyridoxine 5'-phosphate biosynthesis; pyridoxine 5'-phosphate from D-erythrose 4-phosphate: step 4/5. Functionally, catalyzes the NAD(P)-dependent oxidation of 4-(phosphooxy)-L-threonine (HTP) into 2-amino-3-oxo-4-(phosphooxy)butyric acid which spontaneously decarboxylates to form 3-amino-2-oxopropyl phosphate (AHAP). This Paracoccus denitrificans (strain Pd 1222) protein is 4-hydroxythreonine-4-phosphate dehydrogenase.